A 33-amino-acid chain; its full sequence is Gastrin (33 aa).

Gln-1 and Gln-18 each carry pyrrolidone carboxylic acid. Residue Tyr-28 is modified to Sulfotyrosine. At Phe-33 the chain carries Phenylalanine amide.

The protein belongs to the gastrin/cholecystokinin family.

The protein localises to the secreted. Functionally, gastrin stimulates the stomach mucosa to produce and secrete hydrochloric acid and the pancreas to secrete its digestive enzymes. It also stimulates smooth muscle contraction and increases blood circulation and water secretion in the stomach and intestine. The chain is Gastrin (GAST) from Didelphis virginiana (North American opossum).